The primary structure comprises 294 residues: 33 kDa chaperonin (294 aa).

Disulfide bonds link C236-C238 and C269-C272.

The protein belongs to the HSP33 family. In terms of processing, under oxidizing conditions two disulfide bonds are formed involving the reactive cysteines. Under reducing conditions zinc is bound to the reactive cysteines and the protein is inactive.

Its subcellular location is the cytoplasm. Its function is as follows. Redox regulated molecular chaperone. Protects both thermally unfolding and oxidatively damaged proteins from irreversible aggregation. Plays an important role in the bacterial defense system toward oxidative stress. The polypeptide is 33 kDa chaperonin (Desulfotalea psychrophila (strain LSv54 / DSM 12343)).